Here is a 211-residue protein sequence, read N- to C-terminus: Uracil phosphoribosyltransferase (211 aa).

Residues Arg-78, Arg-103, and 130 to 138 (DPMLATGNS) contribute to the 5-phospho-alpha-D-ribose 1-diphosphate site. Uracil is bound by residues Ile-193 and 198 to 200 (GDA). Asp-199 is a 5-phospho-alpha-D-ribose 1-diphosphate binding site.

The protein belongs to the UPRTase family. Requires Mg(2+) as cofactor.

The catalysed reaction is UMP + diphosphate = 5-phospho-alpha-D-ribose 1-diphosphate + uracil. It participates in pyrimidine metabolism; UMP biosynthesis via salvage pathway; UMP from uracil: step 1/1. With respect to regulation, allosterically activated by GTP. In terms of biological role, catalyzes the conversion of uracil and 5-phospho-alpha-D-ribose 1-diphosphate (PRPP) to UMP and diphosphate. The sequence is that of Uracil phosphoribosyltransferase from Acinetobacter baumannii (strain AB307-0294).